Reading from the N-terminus, the 469-residue chain is UDP-N-acetylmuramate--L-alanine ligase (469 aa).

Residue G112–T118 participates in ATP binding.

This sequence belongs to the MurCDEF family.

Its subcellular location is the cytoplasm. It catalyses the reaction UDP-N-acetyl-alpha-D-muramate + L-alanine + ATP = UDP-N-acetyl-alpha-D-muramoyl-L-alanine + ADP + phosphate + H(+). Its pathway is cell wall biogenesis; peptidoglycan biosynthesis. Functionally, cell wall formation. In Laribacter hongkongensis (strain HLHK9), this protein is UDP-N-acetylmuramate--L-alanine ligase.